Reading from the N-terminus, the 343-residue chain is Aspartate-semialdehyde dehydrogenase (343 aa).

Threonine 11 to valine 14 contributes to the NADP(+) binding site. Arginine 109 provides a ligand contact to phosphate. Cysteine 148 functions as the Acyl-thioester intermediate in the catalytic mechanism. Glutamine 174 contributes to the substrate binding site. Serine 177 to glycine 178 contacts NADP(+). Glutamate 200 serves as a coordination point for substrate. A phosphate-binding site is contributed by lysine 203. Arginine 233 contributes to the substrate binding site. The active-site Proton acceptor is histidine 240. Asparagine 321–threonine 322 contributes to the NADP(+) binding site.

Belongs to the aspartate-semialdehyde dehydrogenase family. As to quaternary structure, homodimer.

It catalyses the reaction L-aspartate 4-semialdehyde + phosphate + NADP(+) = 4-phospho-L-aspartate + NADPH + H(+). It functions in the pathway amino-acid biosynthesis; L-lysine biosynthesis via DAP pathway; (S)-tetrahydrodipicolinate from L-aspartate: step 2/4. The protein operates within amino-acid biosynthesis; L-methionine biosynthesis via de novo pathway; L-homoserine from L-aspartate: step 2/3. It participates in amino-acid biosynthesis; L-threonine biosynthesis; L-threonine from L-aspartate: step 2/5. Its function is as follows. Catalyzes the NADPH-dependent formation of L-aspartate-semialdehyde (L-ASA) by the reductive dephosphorylation of L-aspartyl-4-phosphate. The sequence is that of Aspartate-semialdehyde dehydrogenase from Archaeoglobus fulgidus (strain ATCC 49558 / DSM 4304 / JCM 9628 / NBRC 100126 / VC-16).